The chain runs to 174 residues: Co-chaperone protein HscB homolog (174 aa).

In terms of domain architecture, J spans 2–74 (NYFELFKFSP…IRRAEHMLSL (73 aa)).

The protein belongs to the HscB family. In terms of assembly, interacts with HscA and stimulates its ATPase activity.

In terms of biological role, co-chaperone involved in the maturation of iron-sulfur cluster-containing proteins. Seems to help targeting proteins to be folded toward HscA. The polypeptide is Co-chaperone protein HscB homolog (Shewanella sp. (strain ANA-3)).